A 166-amino-acid chain; its full sequence is Phospholipase A2 inhibitor clone 08 (166 aa).

An N-terminal signal peptide occupies residues 1-19 (MRLILLSSLLLLGIFLANG). The C-type lectin domain occupies 46–161 (LKGAFLTVHR…CDDNLLVVCE (116 aa)). 2 disulfides stabilise this stretch: cysteine 83/cysteine 160 and cysteine 138/cysteine 152. Asparagine 122 is a glycosylation site (N-linked (GlcNAc...) asparagine).

Belongs to the alpha-type phospholipase A2 inhibitor family. In terms of assembly, homotrimer; non-covalently linked. In terms of tissue distribution, expressed by the liver.

It localises to the secreted. This phospholipase A2 inhibitor binds directly phospholipase A2 in the presence or absence of calcium. This Bothrops moojeni (Lance-headed viper) protein is Phospholipase A2 inhibitor clone 08.